The primary structure comprises 474 residues: tRNA-2-methylthio-N(6)-dimethylallyladenosine synthase (474 aa).

The MTTase N-terminal domain occupies 3 to 120; sequence KKLHIKTWGC…LPEMINHVQG (118 aa). [4Fe-4S] cluster-binding residues include cysteine 12, cysteine 49, cysteine 83, cysteine 157, cysteine 161, and cysteine 164. A Radical SAM core domain is found at 143-375; that stretch reads RAEGPTAFVS…QQRISQQAME (233 aa). Residues 378 to 441 form the TRAM domain; it reads RKMVGTVQRV…ASSLRGILLR (64 aa).

It belongs to the methylthiotransferase family. MiaB subfamily. Monomer. Requires [4Fe-4S] cluster as cofactor.

The protein resides in the cytoplasm. The catalysed reaction is N(6)-dimethylallyladenosine(37) in tRNA + (sulfur carrier)-SH + AH2 + 2 S-adenosyl-L-methionine = 2-methylsulfanyl-N(6)-dimethylallyladenosine(37) in tRNA + (sulfur carrier)-H + 5'-deoxyadenosine + L-methionine + A + S-adenosyl-L-homocysteine + 2 H(+). In terms of biological role, catalyzes the methylthiolation of N6-(dimethylallyl)adenosine (i(6)A), leading to the formation of 2-methylthio-N6-(dimethylallyl)adenosine (ms(2)i(6)A) at position 37 in tRNAs that read codons beginning with uridine. This Yersinia pestis bv. Antiqua (strain Angola) protein is tRNA-2-methylthio-N(6)-dimethylallyladenosine synthase.